Here is a 75-residue protein sequence, read N- to C-terminus: Tautomerase PptA (75 aa).

The Proton acceptor; via imino nitrogen role is filled by P2.

Belongs to the 4-oxalocrotonate tautomerase family. PptA subfamily. As to quaternary structure, homodimer.

The protein localises to the cytoplasm. In Escherichia coli O139:H28 (strain E24377A / ETEC), this protein is Tautomerase PptA.